The sequence spans 370 residues: Glutamate 5-kinase (370 aa).

Lysine 11 contacts ATP. 3 residues coordinate substrate: serine 52, aspartate 139, and asparagine 151. ATP-binding positions include 171 to 172 (TD) and 213 to 219 (TGGMATK). Residues 278–356 (TGKLLLDAGA…DQIVQILGYE (79 aa)) form the PUA domain.

This sequence belongs to the glutamate 5-kinase family.

The protein resides in the cytoplasm. It catalyses the reaction L-glutamate + ATP = L-glutamyl 5-phosphate + ADP. It participates in amino-acid biosynthesis; L-proline biosynthesis; L-glutamate 5-semialdehyde from L-glutamate: step 1/2. Functionally, catalyzes the transfer of a phosphate group to glutamate to form L-glutamate 5-phosphate. The polypeptide is Glutamate 5-kinase (Synechococcus sp. (strain ATCC 27144 / PCC 6301 / SAUG 1402/1) (Anacystis nidulans)).